The sequence spans 273 residues: Rhamnulose-1-phosphate aldolase (273 aa).

Residue glutamate 117 is part of the active site. Positions 140, 142, and 211 each coordinate Zn(2+).

This sequence belongs to the aldolase class II family. RhaD subfamily. Zn(2+) is required as a cofactor.

Its subcellular location is the cytoplasm. The catalysed reaction is L-rhamnulose 1-phosphate = (S)-lactaldehyde + dihydroxyacetone phosphate. The protein operates within carbohydrate degradation; L-rhamnose degradation; glycerone phosphate from L-rhamnose: step 3/3. Catalyzes the reversible cleavage of L-rhamnulose-1-phosphate to dihydroxyacetone phosphate (DHAP) and L-lactaldehyde. This Listeria innocua serovar 6a (strain ATCC BAA-680 / CLIP 11262) protein is Rhamnulose-1-phosphate aldolase.